A 356-amino-acid polypeptide reads, in one-letter code: Carbohydrate sulfotransferase 10 (356 aa).

At 1–6 the chain is on the cytoplasmic side; that stretch reads MHHQWL. Residues 7–27 form a helical; Signal-anchor for type II membrane protein membrane-spanning segment; sequence LLAACFWVIFMFMVASKFITL. Over 28 to 356 the chain is Lumenal; that stretch reads TFKDPDVYSA…GYQKPDFLLN (329 aa). An N-linked (GlcNAc...) asparagine glycan is attached at Asn99. Residues 127 to 133 and 189 to 197 contribute to the 3'-phosphoadenylyl sulfate site; these read PKVGNTQ and RDPFERLIS. Residues Asn228 and Asn316 are each glycosylated (N-linked (GlcNAc...) asparagine).

It belongs to the sulfotransferase 2 family. In fetal tissues, it is predominantly expressed in brain, and weakly expressed in lung, kidney and liver. In adult, it is highly expressed in brain, testis, ovary, expressed at intermediate level in heart, pancreas, skeletal muscle, spleen and thymus, and weakly expressed in other tissues. In brain, it is expressed at higher level in the frontal lobe.

Its subcellular location is the golgi apparatus membrane. It catalyses the reaction 3-O-{beta-D-GlcA-(1-&gt;[3)-alpha-D-Xyl-(1-&gt;3)-beta-D-GlcA-(1-&gt;](n)-4)-beta-D-Xyl-(1-&gt;4)-Rib-ol-P-Rib-ol-P-3-beta-D-GalNAc-(1-&gt;3)-beta-D-GlcNAc-(1-&gt;4)-O-6-P-alpha-D-Man}-L-Thr-[protein] + 3'-phosphoadenylyl sulfate = 3-O-{O-3-S-beta-D-GlcA-(1-&gt;[3)-alpha-D-Xyl-(1-&gt;3)-beta-D-GlcA-(1-&gt;](n)-4)-beta-D-Xyl-(1-&gt;4)-Rib-ol-P-Rib-ol-P-3-beta-D-GalNAc-(1-&gt;3)-beta-D-GlcNAc-(1-&gt;4)-O-6-P-alpha-D-Man}-L-Thr-[protein] + adenosine 3',5'-bisphosphate + H(+). It carries out the reaction 17beta-estradiol 3-O-(beta-D-glucuronate) + 3'-phosphoadenylyl sulfate = 17beta-estradiol 3-O-(3-sulfo-beta-D-glucuronate) + adenosine 3',5'-bisphosphate + H(+). The enzyme catalyses 17beta-estradiol 3-O-(beta-D-glucuronate) 17-sulfate + 3'-phosphoadenylyl sulfate = 17beta-estradiol 3-O-(3-sulfo-beta-D-glucuronate) 17-sulfate + adenosine 3',5'-bisphosphate + H(+). The catalysed reaction is 17beta-estradiol 17-O-(beta-D-glucuronate) + 3'-phosphoadenylyl sulfate = 17beta-estradiol 17-O-(3-sulfo-beta-D-glucuronate) + adenosine 3',5'-bisphosphate + H(+). It catalyses the reaction 16alpha,17beta-estriol 3-O-(beta-D-glucuronate) + 3'-phosphoadenylyl sulfate = 16alpha,17beta-estriol 3-O-(3-sulfo-beta-D-glucuronate) + adenosine 3',5'-bisphosphate + H(+). It carries out the reaction 16alpha,17beta-estriol 16-O-(beta-D-glucuronate) + 3'-phosphoadenylyl sulfate = 16alpha,17beta-estriol 16-O-(3-sulfo-beta-D-glucuronate) + adenosine 3',5'-bisphosphate + H(+). The enzyme catalyses 16alpha,17beta-estriol 17-O-(beta-D-glucuronate) + 3'-phosphoadenylyl sulfate = 16alpha,17beta-estriol 17-O-(3-sulfo-beta-D-glucuronate) + adenosine 3',5'-bisphosphate + H(+). The catalysed reaction is estrone 3-O-(beta-D-glucuronate) + 3'-phosphoadenylyl sulfate = estrone 3-O-(3-sulfo-beta-D-glucuronate) + adenosine 3',5'-bisphosphate + H(+). It catalyses the reaction 3alpha,20alpha-dihydroxy-5beta-pregnane 3-O-(beta-D-glucuronate) + 3'-phosphoadenylyl sulfate = 3alpha,20alpha-dihydroxy-5beta-pregnane 3-O-(3-sulfo-beta-D-glucuronate) + adenosine 3',5'-bisphosphate + H(+). It carries out the reaction testosterone 17-O-(beta-D-glucuronate) + 3'-phosphoadenylyl sulfate = testosterone 17-O-(3-sulfo-beta-D-glucuronate) + adenosine 3',5'-bisphosphate + H(+). The enzyme catalyses 3beta-androst-5-en-17-one 3-O-(beta-D-glucuronate) + 3'-phosphoadenylyl sulfate = 3beta-androst-5-en-17-one 3-O-(3-sulfo-beta-D-glucuronate) + adenosine 3',5'-bisphosphate + H(+). The catalysed reaction is 3alpha,17alpha-dihydroxy-5beta-androstane-11-one-17beta-carboxylate 3-O-(beta-D-glucuronate) + 3'-phosphoadenylyl sulfate = 3alpha,17alpha-dihydroxy-5beta-androstane-11-one-17beta-carboxylate 3-O-(3-sulfo-beta-D-glucuronate) + adenosine 3',5'-bisphosphate + H(+). It catalyses the reaction 3alpha-hydroxyetiocholan-17-one 3-O-(beta-D-glucuronate) + 3'-phosphoadenylyl sulfate = 3alpha-hydroxyetiocholan-17-one 3-O-(3-sulfo-beta-D-glucuronate) + adenosine 3',5'-bisphosphate + H(+). It participates in steroid metabolism. It functions in the pathway protein modification; carbohydrate sulfation. Functionally, catalyzes the transfer of sulfate from 3'-phosphoadenylyl sulfate (PAPS) to position 3 of terminal glucuronic acid of both protein- and lipid-linked oligosaccharides. Participates in biosynthesis of HNK-1 carbohydrate structure 3-O-sulfo-beta-D-GlcA-(1-&gt;3)-beta-D-Gal-(1-&gt;4)-D-GlcNAc-R, a sulfated glucuronyl-lactosaminyl residue carried by many neural recognition molecules, which is involved in cell interactions during ontogenetic development and in synaptic plasticity in the adult. May be indirectly involved in synapse plasticity of the hippocampus, via its role in HNK-1 biosynthesis. Sulfates terminal glucuronyl residue of the laminin globular (LG)-domain binding epitope on DAG1/alpha-dystroglycan and prevents further polymerization by LARGE1 glycosyltransferase. Likely defines the chain length of LG epitope, conferring binding specificity to extracellular matrix components. Plays a role in down-regulating the steroid hormones. Sulfates glucuronidated estrogens and androgens with an impact in hormone cycle and fertility. Has a preference for glucuronyl moiety at the 3-hydroxyl group of a sterol ring rather than the 17-hydroxyl group, showing high catalytic efficiency for 17beta-estradiol 3-O-(beta-D-glucuronate) and dehydroepiandrosterone 3-O-(beta-D-glucuronate) hormones. The chain is Carbohydrate sulfotransferase 10 from Homo sapiens (Human).